A 299-amino-acid chain; its full sequence is Peroxisomal biogenesis factor 19 (299 aa).

The interval Met1 to Leu63 is disordered. Residue Ala2 is modified to N-acetylalanine. The docking to the peroxisome membrane and binding to PEX3 stretch occupies residues Ala2–Gly56. Residues Ala2 to Met91 are necessary for PEX19 function on peroxisome biogenesis. Acidic residues predominate over residues Arg16 to Asp27. Residues Ser35, Ser54, and Ser66 each carry the phosphoserine modification. Residue Thr236 is modified to Phosphothreonine. Cys296 bears the Cysteine methyl ester mark. Cys296 carries the S-farnesyl cysteine lipid modification. Positions Leu297–Met299 are cleaved as a propeptide — removed in mature form.

It belongs to the peroxin-19 family. In terms of assembly, interacts with a broad range of peroxisomal membrane proteins, including PEX3, PEX10, PEX11A, PEX11B, PEX12, PEX13, PEX14 and PEX16, PXMP2/PMP22, PXMP4/PMP24, SLC25A17/PMP34, ABCD1/ALDP, ABCD2/ALDRP, and ABCD3/PMP70. Also interacts with the tumor suppressor CDKN2A/p19ARF.

It localises to the cytoplasm. It is found in the peroxisome membrane. Functionally, necessary for early peroxisomal biogenesis. Acts both as a cytosolic chaperone and as an import receptor for peroxisomal membrane proteins (PMPs). Binds and stabilizes newly synthesized PMPs in the cytoplasm by interacting with their hydrophobic membrane-spanning domains, and targets them to the peroxisome membrane by binding to the integral membrane protein PEX3. Excludes CDKN2A from the nucleus and prevents its interaction with MDM2, which results in active degradation of TP53. The protein is Peroxisomal biogenesis factor 19 (PEX19) of Pongo abelii (Sumatran orangutan).